The sequence spans 96 residues: MSAVTPLLDGLALRLYIQPKASRDQIVGLHGDELKVAITAPPVDGQANAHLIKFIAKQFRVAKSQVIIEKGELGRHKQIKIVNPQQIPPEVATLLE.

The protein belongs to the UPF0235 family.

This Yersinia enterocolitica serotype O:8 / biotype 1B (strain NCTC 13174 / 8081) protein is UPF0235 protein YE3436.